The primary structure comprises 117 residues: Large ribosomal subunit protein bL20 (117 aa).

This sequence belongs to the bacterial ribosomal protein bL20 family.

Functionally, binds directly to 23S ribosomal RNA and is necessary for the in vitro assembly process of the 50S ribosomal subunit. It is not involved in the protein synthesizing functions of that subunit. In Campylobacter jejuni subsp. jejuni serotype O:2 (strain ATCC 700819 / NCTC 11168), this protein is Large ribosomal subunit protein bL20.